A 289-amino-acid polypeptide reads, in one-letter code: Phosphatidylglycerol--prolipoprotein diacylglyceryl transferase (289 aa).

A run of 3 helical transmembrane segments spans residues 13–33 (LGPLAIRWYALAYVAGILLGW), 61–81 (FILWVTLAIIVGGRLGHVLFY), and 99–119 (GGMSFHGGAIGVFLAIILFAM). Residue R144 participates in a 1,2-diacyl-sn-glycero-3-phospho-(1'-sn-glycerol) binding. 2 helical membrane passes run 218–238 (GVVMGLFTTFYAVFRISLENV) and 250–270 (LGLTMGIYLSIPMLLFGLWLI).

It belongs to the Lgt family.

The protein resides in the cell inner membrane. The catalysed reaction is L-cysteinyl-[prolipoprotein] + a 1,2-diacyl-sn-glycero-3-phospho-(1'-sn-glycerol) = an S-1,2-diacyl-sn-glyceryl-L-cysteinyl-[prolipoprotein] + sn-glycerol 1-phosphate + H(+). Its pathway is protein modification; lipoprotein biosynthesis (diacylglyceryl transfer). Catalyzes the transfer of the diacylglyceryl group from phosphatidylglycerol to the sulfhydryl group of the N-terminal cysteine of a prolipoprotein, the first step in the formation of mature lipoproteins. In Phenylobacterium zucineum (strain HLK1), this protein is Phosphatidylglycerol--prolipoprotein diacylglyceryl transferase.